The chain runs to 880 residues: Endoglucanase E-4 (880 aa).

The first 46 residues, 1 to 46, serve as a signal peptide directing secretion; that stretch reads MSVTEPPPRRRGRHSRARRFLTSLGATAALTAGMLGVPLATGTAHA. The active-site Nucleophile is D104. Catalysis depends on residues H422, H427, D461, and E470. In terms of domain architecture, CBM3 spans 504 to 652; it reads PDGPEIFVEA…GVPVWGTAPE (149 aa). The interval 647 to 688 is disordered; that stretch reads WGTAPEEGEEPGGGEGPGGGEEPGEDVTPPSAPGSPAVRDVT. The 93-residue stretch at 678 to 770 folds into the Fibronectin type-III domain; the sequence is APGSPAVRDV…TVSFTTLAEN (93 aa). The CBM2 domain maps to 771–880; sequence GGGPDASCTV…TLNGEPCALA (110 aa).

Belongs to the glycosyl hydrolase 9 (cellulase E) family.

The catalysed reaction is Endohydrolysis of (1-&gt;4)-beta-D-glucosidic linkages in cellulose, lichenin and cereal beta-D-glucans.. Its pathway is glycan metabolism; cellulose degradation. This chain is Endoglucanase E-4 (celD), found in Thermobifida fusca (Thermomonospora fusca).